We begin with the raw amino-acid sequence, 171 residues long: Protein GrpE (171 aa).

Positions 1 to 22 (MNHEHPDIESQQSAADAAAAAG) are disordered.

The protein belongs to the GrpE family. In terms of assembly, homodimer.

The protein resides in the cytoplasm. In terms of biological role, participates actively in the response to hyperosmotic and heat shock by preventing the aggregation of stress-denatured proteins, in association with DnaK and GrpE. It is the nucleotide exchange factor for DnaK and may function as a thermosensor. Unfolded proteins bind initially to DnaJ; upon interaction with the DnaJ-bound protein, DnaK hydrolyzes its bound ATP, resulting in the formation of a stable complex. GrpE releases ADP from DnaK; ATP binding to DnaK triggers the release of the substrate protein, thus completing the reaction cycle. Several rounds of ATP-dependent interactions between DnaJ, DnaK and GrpE are required for fully efficient folding. The protein is Protein GrpE of Stenotrophomonas maltophilia (strain R551-3).